Reading from the N-terminus, the 94-residue chain is Pyrimidine/purine nucleoside phosphorylase (94 aa).

Belongs to the nucleoside phosphorylase PpnP family.

The enzyme catalyses a purine D-ribonucleoside + phosphate = a purine nucleobase + alpha-D-ribose 1-phosphate. The catalysed reaction is adenosine + phosphate = alpha-D-ribose 1-phosphate + adenine. It catalyses the reaction cytidine + phosphate = cytosine + alpha-D-ribose 1-phosphate. It carries out the reaction guanosine + phosphate = alpha-D-ribose 1-phosphate + guanine. The enzyme catalyses inosine + phosphate = alpha-D-ribose 1-phosphate + hypoxanthine. The catalysed reaction is thymidine + phosphate = 2-deoxy-alpha-D-ribose 1-phosphate + thymine. It catalyses the reaction uridine + phosphate = alpha-D-ribose 1-phosphate + uracil. It carries out the reaction xanthosine + phosphate = alpha-D-ribose 1-phosphate + xanthine. Catalyzes the phosphorolysis of diverse nucleosides, yielding D-ribose 1-phosphate and the respective free bases. Can use uridine, adenosine, guanosine, cytidine, thymidine, inosine and xanthosine as substrates. Also catalyzes the reverse reactions. The polypeptide is Pyrimidine/purine nucleoside phosphorylase (Cronobacter sakazakii (strain ATCC BAA-894) (Enterobacter sakazakii)).